We begin with the raw amino-acid sequence, 120 residues long: MSTQQDLRERRRQRLRFQLRRKGGGRPRLSVFRSGKNIYAQVIDDVAGRTLAAASSLDKALREQLKTGADSDAAVAVGKLVAERAVAAGVSLVVFDRGSYMYHGRIKALAEAAREGGLAF.

This sequence belongs to the universal ribosomal protein uL18 family. Part of the 50S ribosomal subunit; part of the 5S rRNA/L5/L18/L25 subcomplex. Contacts the 5S and 23S rRNAs.

Functionally, this is one of the proteins that bind and probably mediate the attachment of the 5S RNA into the large ribosomal subunit, where it forms part of the central protuberance. In Gluconacetobacter diazotrophicus (strain ATCC 49037 / DSM 5601 / CCUG 37298 / CIP 103539 / LMG 7603 / PAl5), this protein is Large ribosomal subunit protein uL18.